Here is a 433-residue protein sequence, read N- to C-terminus: Homogentisate 1,2-dioxygenase (433 aa).

The active-site Proton acceptor is His288. Fe cation-binding residues include His331 and Glu337. Tyr346 and His367 together coordinate homogentisate. Fe cation is bound at residue His367.

Belongs to the homogentisate dioxygenase family. Hexamer; dimer of trimers. Fe cation serves as cofactor.

It carries out the reaction homogentisate + O2 = 4-maleylacetoacetate + H(+). It functions in the pathway amino-acid degradation; L-phenylalanine degradation; acetoacetate and fumarate from L-phenylalanine: step 4/6. Involved in the catabolism of homogentisate (2,5-dihydroxyphenylacetate or 2,5-OH-PhAc), a central intermediate in the degradation of phenylalanine and tyrosine. Catalyzes the oxidative ring cleavage of the aromatic ring of homogentisate to yield maleylacetoacetate. The sequence is that of Homogentisate 1,2-dioxygenase from Pseudomonas putida (strain ATCC 700007 / DSM 6899 / JCM 31910 / BCRC 17059 / LMG 24140 / F1).